Here is a 204-residue protein sequence, read N- to C-terminus: UPF0637 protein Lm4b_01081 (204 aa).

This sequence belongs to the UPF0637 family.

This is UPF0637 protein Lm4b_01081 from Listeria monocytogenes serotype 4b (strain CLIP80459).